A 439-amino-acid chain; its full sequence is GTPase Obg (439 aa).

Residues 5 to 164 (TDFFDQATIV…LTLELELKML (160 aa)) form the Obg domain. Residues 165–335 (ADVGLVGFPN…LLQRVAELLR (171 aa)) form the OBG-type G domain. GTP-binding positions include 171 to 178 (GFPNAGKS), 196 to 200 (FTTLT), 217 to 220 (DIPG), 287 to 290 (NKAD), and 316 to 318 (SAA). 2 residues coordinate Mg(2+): S178 and T198. Residues 337–359 (DPPPQRDPVDPDEPPLEWPLPPV) are disordered. The region spanning 356–433 (LPPVDENAFT…IGRAELVWDD (78 aa)) is the OCT domain.

This sequence belongs to the TRAFAC class OBG-HflX-like GTPase superfamily. OBG GTPase family. In terms of assembly, monomer. Mg(2+) is required as a cofactor.

The protein localises to the cytoplasm. In terms of biological role, an essential GTPase which binds GTP, GDP and possibly (p)ppGpp with moderate affinity, with high nucleotide exchange rates and a fairly low GTP hydrolysis rate. Plays a role in control of the cell cycle, stress response, ribosome biogenesis and in those bacteria that undergo differentiation, in morphogenesis control. The chain is GTPase Obg from Chloroflexus aggregans (strain MD-66 / DSM 9485).